The chain runs to 206 residues: 2,3-bisphosphoglycerate-dependent phosphoglycerate mutase (206 aa).

Substrate is bound by residues 9–16 (RHGQSEWN), 22–23 (TG), Arg61, 88–91 (ERDY), Lys99, 115–116 (RR), and 159–160 (GN). The Tele-phosphohistidine intermediate role is filled by His10. The Proton donor/acceptor role is filled by Glu88.

This sequence belongs to the phosphoglycerate mutase family. BPG-dependent PGAM subfamily. In terms of assembly, homodimer.

It catalyses the reaction (2R)-2-phosphoglycerate = (2R)-3-phosphoglycerate. The protein operates within carbohydrate degradation; glycolysis; pyruvate from D-glyceraldehyde 3-phosphate: step 3/5. Functionally, catalyzes the interconversion of 2-phosphoglycerate and 3-phosphoglycerate. The chain is 2,3-bisphosphoglycerate-dependent phosphoglycerate mutase from Brucella ovis (strain ATCC 25840 / 63/290 / NCTC 10512).